The sequence spans 301 residues: Diaminopimelate epimerase (301 aa).

The substrate site is built by Asn15, Gln47, and Asn67. The active-site Proton donor is Cys76. Substrate contacts are provided by residues 77–78 (GN), Asn163, Asn197, and 215–216 (ER). Cys224 (proton acceptor) is an active-site residue. Position 225-226 (225-226 (GS)) interacts with substrate.

Belongs to the diaminopimelate epimerase family. In terms of assembly, homodimer.

The protein resides in the cytoplasm. It carries out the reaction (2S,6S)-2,6-diaminopimelate = meso-2,6-diaminopimelate. It participates in amino-acid biosynthesis; L-lysine biosynthesis via DAP pathway; DL-2,6-diaminopimelate from LL-2,6-diaminopimelate: step 1/1. In terms of biological role, catalyzes the stereoinversion of LL-2,6-diaminopimelate (L,L-DAP) to meso-diaminopimelate (meso-DAP), a precursor of L-lysine and an essential component of the bacterial peptidoglycan. This is Diaminopimelate epimerase from Rhizobium etli (strain ATCC 51251 / DSM 11541 / JCM 21823 / NBRC 15573 / CFN 42).